A 161-amino-acid polypeptide reads, in one-letter code: MSEDHHDEEQFDSAESGAAATFPKQCSALRKNEHVMIRGRPCKIVEMSTSKTGKHGHAKVHMVAIDIFTTKKLEDICPSTHNMDVPVVKRREYILMSIEDGFCSLMDPESCELKDDLKMPEGDLGNTIREALEKDEGSVLVQVVAACGEEAILGYKISTKE.

At lysine 54 the chain carries Hypusine.

This sequence belongs to the eIF-5A family. Lys-54 undergoes hypusination, a unique post-translational modification that consists in the addition of a butylamino group from spermidine to lysine side chain, leading to the formation of the unusual amino acid hypusine. eIF-5As are the only known proteins to undergo this modification, which is essential for their function. In terms of tissue distribution, expressed specifically in the germline in the distal region of gonads where germ cells actively proliferate.

It localises to the cytoplasm. Functionally, translation factor that promotes translation elongation and termination, particularly upon ribosome stalling at specific amino acid sequence contexts. Binds between the exit (E) and peptidyl (P) site of the ribosome and promotes rescue of stalled ribosome: specifically required for efficient translation of polyproline-containing peptides as well as other motifs that stall the ribosome. Acts as a ribosome quality control (RQC) cofactor by joining the RQC complex to facilitate peptidyl transfer during CAT tailing step. Required for mitotic germ cell proliferation, gametogenesis after entry into meiosis, and localization of the P granule component pgl-1 on P granules. This Caenorhabditis elegans protein is Eukaryotic translation initiation factor 5A-1 (iff-1).